We begin with the raw amino-acid sequence, 1866 residues long: Rho GTPase-activating protein 100F (1866 aa).

3 disordered regions span residues 22–98, 262–336, and 466–530; these read MLCC…AGVK, RRGN…NNYS, and LRSS…DTEA. The span at 59-77 shows a compositional bias: low complexity; that stretch reads GNQQHHGNQQHHGNQQQHH. The region spanning 179–264 is the PDZ domain; that stretch reads LVEIVKRPGQ…LVLAIRQRRG (86 aa). Residues 271-286 show a composition bias toward pro residues; that stretch reads PGPPTLSRPEQKPPPV. Basic and acidic residues predominate over residues 301–326; the sequence is TDRMPRPRSSRDRRTGDGREMTESRS. The residue at position 719 (S719) is a Phosphoserine. Residues 745-775 form a disordered region; it reads AGPASPSGSILSTGGHQSPAPTPSATLPRPH. Residues 750–760 are compositionally biased toward polar residues; it reads PSGSILSTGGH. One can recognise a C2 domain in the interval 789-908; sequence KLDKPIVDIG…LRQSPLHQLA (120 aa). Residues 948–1148 enclose the Rho-GAP domain; that stretch reads ADLETVVNRE…YLLQIWPQPQ (201 aa). Disordered regions lie at residues 1273 to 1328, 1356 to 1380, 1393 to 1479, 1514 to 1607, 1644 to 1727, and 1819 to 1840; these read GGSV…QVKI, PTTQADTESTLGCKESNGTASRRGN, SVVN…DLVS, FTPI…MVST, YTND…YGTL, and DEKPGSNGGNAHGEEKLGADKG. Over residues 1282 to 1292 the composition is skewed to pro residues; sequence DPSPLPLPGTP. The segment covering 1293 to 1302 has biased composition (low complexity); it reads SPGSSSASTG. Composition is skewed to polar residues over residues 1356–1377, 1393–1408, and 1416–1429; these read PTTQADTESTLGCKESNGTASR, SVVNEESSYSSKYTGS, and GNSSYTPSKANASG. Residues 1443 to 1479 show a composition bias toward low complexity; sequence SSATSSSSSSQATVLSAGSTATSAPTTSSDDSDDLVS. A compositionally biased stretch (polar residues) spans 1538 to 1587; it reads QLVTPISGSSSKPGATTGAISKYTTGSVESSINANSQKLSSPSRLCNSKD. Low complexity-rich tracts occupy residues 1590 to 1607 and 1644 to 1658; these read SRTGTASSTTPATSMVST and YTNDTKNSGSSSSKS. Over residues 1659-1670 the composition is skewed to gly residues; the sequence is GIGGGSGTGLGA. Low complexity-rich tracts occupy residues 1671–1688 and 1696–1720; these read VSGASSETRSFGSTLFGS and GSSHNHSSASPSPFTTTNGNGNHNT. Over residues 1830–1839 the composition is skewed to basic and acidic residues; sequence HGEEKLGADK.

In terms of assembly, interacts (via PDZ domain) with Nrx-1; may recruit Nrx-1 to the presynaptic active zone.

Its subcellular location is the presynapse. In terms of biological role, GTPase activator for the Rho-type GTPases by converting them to an inactive GDP-bound state. Promotes the anchoring of Liprin-alpha clusters at synapses. Recruits and keeps Nrx-1 levels high in active zones in the presynapse opposite the postsynaptic region. In Drosophila melanogaster (Fruit fly), this protein is Rho GTPase-activating protein 100F (RhoGAP100F).